Here is a 272-residue protein sequence, read N- to C-terminus: Protein SSO0103 (272 aa).

It belongs to the CinA family.

This is Protein SSO0103 from Saccharolobus solfataricus (strain ATCC 35092 / DSM 1617 / JCM 11322 / P2) (Sulfolobus solfataricus).